Consider the following 430-residue polypeptide: Adenylosuccinate synthetase (430 aa).

GTP contacts are provided by residues 12–18 and 40–42; these read GDEGKGK and GHT. The Proton acceptor role is filled by aspartate 13. Positions 13 and 40 each coordinate Mg(2+). Residues 13-16, 38-41, threonine 128, arginine 142, glutamine 223, threonine 238, and arginine 302 contribute to the IMP site; these read DEGK and NAGH. Histidine 41 acts as the Proton donor in catalysis. 298 to 304 lines the substrate pocket; sequence TTTGRPR. GTP contacts are provided by residues arginine 304, 330 to 332, and 412 to 414; these read LLD and SVG.

Belongs to the adenylosuccinate synthetase family. As to quaternary structure, homodimer. Mg(2+) serves as cofactor.

It is found in the cytoplasm. It catalyses the reaction IMP + L-aspartate + GTP = N(6)-(1,2-dicarboxyethyl)-AMP + GDP + phosphate + 2 H(+). It participates in purine metabolism; AMP biosynthesis via de novo pathway; AMP from IMP: step 1/2. Plays an important role in the de novo pathway of purine nucleotide biosynthesis. Catalyzes the first committed step in the biosynthesis of AMP from IMP. The polypeptide is Adenylosuccinate synthetase (Listeria monocytogenes serotype 4a (strain HCC23)).